Consider the following 362-residue polypeptide: Histidinol-phosphate aminotransferase (362 aa).

Lys-220 bears the N6-(pyridoxal phosphate)lysine mark.

The protein belongs to the class-II pyridoxal-phosphate-dependent aminotransferase family. Histidinol-phosphate aminotransferase subfamily. In terms of assembly, homodimer. It depends on pyridoxal 5'-phosphate as a cofactor.

The enzyme catalyses L-histidinol phosphate + 2-oxoglutarate = 3-(imidazol-4-yl)-2-oxopropyl phosphate + L-glutamate. Its pathway is amino-acid biosynthesis; L-histidine biosynthesis; L-histidine from 5-phospho-alpha-D-ribose 1-diphosphate: step 7/9. This Rhodospirillum centenum (strain ATCC 51521 / SW) protein is Histidinol-phosphate aminotransferase.